The sequence spans 788 residues: MKDKSIKVLEFNKIQEILKNYTCTKAAKDIIEDLKPYDSVYEVREHLEETKEAFKLLITKGAPPFEGVYDIRNGIYLAEKGSALLPGQLLKIAAVLRCARRFKEYINHKEEEESYRVLENICEGIFSLPKIEEEIFNAIEGEDEIADRASSILYNIRRSLKEKNYSVRDKINSLVRSYSSYLQENIYTVRGDRYVLPVKVEHKGAVPGLVHDQSSTGATLFIEPMSLVNLNNEIKELMLKEKAEIERILTVLSAKINANITGVKTDANIVWELDFIFAKAKFASEYNCTCPTINDEGIVDIIEGRHPLIDRREVVPISVKLGEEFTSLMITGPNTGGKTVTLKTVGLIHLMAMSGLMIPARENSVISYFNNVFADIGDEQSIEQSLSTFSSHMKNIVEIMDKADENSLVLFDELGAGTDPTEGAALAISILENLRKRGAKIIATTHYSELKAYALRKEGVENASVEFDVETLRPTYRLLIGIPGKSNAFEISKRLGLPDYIIDFARENISNENIRFEELIQNLQEKSIKAQEDARLAENLKLERDKEKKKYEEKLEGLQKVRDNALIDARREAKNIIKEAKEEADKILKDIRQLERMGYSSDARRKLEEERKKLKDKLDSIEEKEIKTVHKGEALKNVKEGDEVLLASINQKVIVLSKPDNKGDVLVQAGIMKITANIKDLRAAKGSNFNINSSKTKKSKKLNLNLRKVESSVDLRGMDAEEAIYTVDKYLDEAYLGGLGEVTIVHGKGTGVLRKTIMDMLKGHPHVKRHRLGEYGEGGTGVTVVEIK.

Position 332–339 (332–339) interacts with ATP; the sequence is GPNTGGKT. The Smr domain occupies 713–788; it reads VDLRGMDAEE…GTGVTVVEIK (76 aa).

The protein belongs to the DNA mismatch repair MutS family. MutS2 subfamily. In terms of assembly, homodimer. Binds to stalled ribosomes, contacting rRNA.

Functionally, endonuclease that is involved in the suppression of homologous recombination and thus may have a key role in the control of bacterial genetic diversity. Its function is as follows. Acts as a ribosome collision sensor, splitting the ribosome into its 2 subunits. Detects stalled/collided 70S ribosomes which it binds and splits by an ATP-hydrolysis driven conformational change. Acts upstream of the ribosome quality control system (RQC), a ribosome-associated complex that mediates the extraction of incompletely synthesized nascent chains from stalled ribosomes and their subsequent degradation. Probably generates substrates for RQC. This chain is Endonuclease MutS2, found in Clostridium botulinum (strain Loch Maree / Type A3).